Here is a 364-residue protein sequence, read N- to C-terminus: NAC transcription factor 56 (364 aa).

Positions 1-23 (MESTDSSGGPPPPQPNLPPGFRF) are disordered. The segment covering 9–18 (GPPPPQPNLP) has biased composition (pro residues). The region spanning 17 to 178 (LPPGFRFHPT…DWVLCRIYKK (162 aa)) is the NAC domain. A DNA-binding region spans residues 116-184 (VGVKKALVFY…IYKKNNASRH (69 aa)).

Stamen specific, in anthers from stage 8. Expressed in the outer integument, but seems not expressed in the embryo at the torpedo stage.

The protein resides in the nucleus. Its function is as follows. Transcription factor of the NAC family. Together with NAC018/NARS2, regulates embryogenesis by regulating the development and degeneration of ovule integuments, a process required for intertissue communication between the embryo and the maternal integument. This is NAC transcription factor 56 from Arabidopsis thaliana (Mouse-ear cress).